The chain runs to 971 residues: Exportin-2 (971 aa).

The Importin N-terminal domain occupies 29–102; the sequence is AEKFLESVEG…KANIVNLMLS (74 aa).

This sequence belongs to the XPO2/CSE1 family. As to quaternary structure, interacts with cftr.

The protein localises to the cytoplasm. It localises to the nucleus. In terms of biological role, export receptor for importin alpha. Mediates importin-alpha re-export from the nucleus to the cytoplasm after import substrates have been released into the nucleoplasm. Negatively regulates fluid secretion and plays a role in fluid homeostasis by down-regulating cftr activity. In Oreochromis niloticus (Nile tilapia), this protein is Exportin-2 (cse1l).